Reading from the N-terminus, the 325-residue chain is Biotin synthase (325 aa).

Residues 52-281 (YQKDDVVLCS…AKPLLICGGR (230 aa)) form the Radical SAM core domain. Residues Cys-70, Cys-74, and Cys-77 each coordinate [4Fe-4S] cluster. [2Fe-2S] cluster-binding residues include Ser-114, Cys-146, and Cys-206.

Belongs to the radical SAM superfamily. Biotin synthase family. As to quaternary structure, homodimer. Requires [4Fe-4S] cluster as cofactor. The cofactor is [2Fe-2S] cluster.

The catalysed reaction is (4R,5S)-dethiobiotin + (sulfur carrier)-SH + 2 reduced [2Fe-2S]-[ferredoxin] + 2 S-adenosyl-L-methionine = (sulfur carrier)-H + biotin + 2 5'-deoxyadenosine + 2 L-methionine + 2 oxidized [2Fe-2S]-[ferredoxin]. Its pathway is cofactor biosynthesis; biotin biosynthesis; biotin from 7,8-diaminononanoate: step 2/2. In terms of biological role, catalyzes the conversion of dethiobiotin (DTB) to biotin by the insertion of a sulfur atom into dethiobiotin via a radical-based mechanism. This chain is Biotin synthase, found in Syntrophus aciditrophicus (strain SB).